A 396-amino-acid polypeptide reads, in one-letter code: GTPase Obg (396 aa).

The region spanning 1 to 159 (MKFVDEASIY…RTLKLEMKVL (159 aa)) is the Obg domain. The interval 120–146 (GGHHGLGNTRFKSSTNRAPRQTTKGTV) is disordered. Polar residues predominate over residues 129–144 (RFKSSTNRAPRQTTKG). The 174-residue stretch at 160 to 333 (ADVGLLGLPN…LCLDLMTALD (174 aa)) folds into the OBG-type G domain. Residues 166 to 173 (GLPNAGKS), 191 to 195 (FTTLV), 213 to 216 (DIPG), 283 to 286 (NKTD), and 314 to 316 (SAI) each bind GTP. Mg(2+) contacts are provided by S173 and T193.

This sequence belongs to the TRAFAC class OBG-HflX-like GTPase superfamily. OBG GTPase family. Monomer. It depends on Mg(2+) as a cofactor.

The protein resides in the cytoplasm. In terms of biological role, an essential GTPase which binds GTP, GDP and possibly (p)ppGpp with moderate affinity, with high nucleotide exchange rates and a fairly low GTP hydrolysis rate. Plays a role in control of the cell cycle, stress response, ribosome biogenesis and in those bacteria that undergo differentiation, in morphogenesis control. The polypeptide is GTPase Obg (Marinomonas sp. (strain MWYL1)).